The chain runs to 521 residues: Ankyrin repeat and death domain-containing protein 1B (521 aa).

ANK repeat units lie at residues Ala-60–Ala-89, Met-93–Val-122, His-126–Ala-155, Glu-159–Gln-190, Arg-194–Glu-223, Asp-227–Glu-256, Leu-260–Gln-289, Ser-293–Val-322, Arg-326–Ile-355, and Gln-359–Trp-388. A Death domain is found at Thr-420 to Lys-508.

This is Ankyrin repeat and death domain-containing protein 1B (Ankdd1b) from Mus musculus (Mouse).